The primary structure comprises 883 residues: Integrator complex subunit 6-B (883 aa).

Residues 3 to 227 (ILLFLLDTSA…QCLESLVQKI (225 aa)) enclose the VWFA domain. Residues 626–633 (MMIDEADE) carry the Inhibitory loop motif.

Belongs to the Integrator subunit 6 family. Component of the Integrator complex, composed of core subunits INTS1, INTS2, INTS3, INTS4, INTS5, INTS6, INTS7, INTS8, INTS9/RC74, INTS10, INTS11/CPSF3L, INTS12, INTS13, INTS14 and INTS15. The core complex associates with protein phosphatase 2A subunits PPP2CA and PPP2R1A, to form the Integrator-PP2A (INTAC) complex.

It localises to the nucleus. The protein resides in the chromosome. Component of the integrator complex, a multiprotein complex that terminates RNA polymerase II (Pol II) transcription in the promoter-proximal region of genes. The integrator complex provides a quality checkpoint during transcription elongation by driving premature transcription termination of transcripts that are unfavorably configured for transcriptional elongation: the complex terminates transcription by (1) catalyzing dephosphorylation of the C-terminal domain (CTD) of Pol II subunit POLR2A/RPB1 and SUPT5H/SPT5, (2) degrading the exiting nascent RNA transcript via endonuclease activity and (3) promoting the release of Pol II from bound DNA. The integrator complex is also involved in terminating the synthesis of non-coding Pol II transcripts, such as enhancer RNAs (eRNAs), small nuclear RNAs (snRNAs), telomerase RNAs and long non-coding RNAs (lncRNAs). Within the integrator complex, INTS6 acts as a molecular adapter that promotes assembly of protein phosphatase 2A (PP2A) subunits to the integrator core complex, promoting recruitment of PP2A to transcription pause-release checkpoint. The polypeptide is Integrator complex subunit 6-B (ints6-b) (Xenopus laevis (African clawed frog)).